The sequence spans 119 residues: Large ribosomal subunit protein bL19 (119 aa).

Belongs to the bacterial ribosomal protein bL19 family.

Functionally, this protein is located at the 30S-50S ribosomal subunit interface and may play a role in the structure and function of the aminoacyl-tRNA binding site. This Treponema denticola (strain ATCC 35405 / DSM 14222 / CIP 103919 / JCM 8153 / KCTC 15104) protein is Large ribosomal subunit protein bL19.